A 363-amino-acid polypeptide reads, in one-letter code: Forkhead box protein I1 (363 aa).

Low complexity predominate over residues 1-18 (MNPVQQPAQQRSPASSLP). Disordered stretches follow at residues 1–24 (MNPVQQPAQQRSPASSLPHPKRAQ), 210–269 (DNGN…SPPA), and 344–363 (TTAQKQPQFLQQPPLYQGRY). Residues 125 to 219 (RPPYSYSALI…DNGNFRRKRK (95 aa)) constitute a DNA-binding region (fork-head). Residues 231 to 243 (KIGEDHLNPKGKE) are compositionally biased toward basic and acidic residues. Composition is skewed to low complexity over residues 244 to 258 (SPPMITPSSPEEPSP) and 347 to 363 (QKQPQFLQQPPLYQGRY).

Its subcellular location is the nucleus. Functionally, transcription factor. Essential for ventral specification of the early cephalic (head) ectoderm during gastrulation, playing a role in the 'non-neural' versus 'neural' cell fate choice. Binds to DNA via the target sequence 5'-[AG]TAAA[CT]A-3', with 5'-ATAAACA-3' being the preferred binding site. The polypeptide is Forkhead box protein I1 (Xenopus tropicalis (Western clawed frog)).